The following is a 235-amino-acid chain: UPF0502 protein Bcep18194_B0081 (235 aa).

It belongs to the UPF0502 family.

The sequence is that of UPF0502 protein Bcep18194_B0081 from Burkholderia lata (strain ATCC 17760 / DSM 23089 / LMG 22485 / NCIMB 9086 / R18194 / 383).